Consider the following 346-residue polypeptide: UPF0283 membrane protein VP1870 (346 aa).

A disordered region spans residues 1–30 (MSELKQKQIFSEKALEKEQQSDSPELTAQK). Polar residues predominate over residues 21–30 (SDSPELTAQK). 2 helical membrane-spanning segments follow: residues 73-93 (VFAT…VTAV) and 98-118 (WLAL…LGAI).

This sequence belongs to the UPF0283 family.

The protein localises to the cell inner membrane. This chain is UPF0283 membrane protein VP1870, found in Vibrio parahaemolyticus serotype O3:K6 (strain RIMD 2210633).